Consider the following 103-residue polypeptide: Heme-copper oxidase subunit 4 (103 aa).

A run of 3 helical transmembrane segments spans residues 20-40, 42-62, and 75-95; these read VWIV…EGIA, NPFV…ALFF, and ITVS…TSVL.

It localises to the cell membrane. This is Heme-copper oxidase subunit 4 (aoxC) from Aeropyrum pernix (strain ATCC 700893 / DSM 11879 / JCM 9820 / NBRC 100138 / K1).